Here is a 299-residue protein sequence, read N- to C-terminus: Biotin transporter (299 aa).

10 helical membrane-spanning segments follow: residues 2 to 22 (ALLIITTILWAFSFSFYGEYL), 26 to 46 (VDSYFAVLVRVGLAALVFLPF), 56 to 76 (TVGLYMLVGAMQLGVMYMLSF), 81 to 101 (YLTVSELLLFTVLTPLYITLI), 110 to 130 (LRWGYAFSALLAVIGAGIIRY), 137 to 157 (FWTGLLLVQLSNITFAIGMVG), 172 to 192 (AFAWFYLGAFLVAVIAWFLLG), 202 to 222 (LQWGILVFLGVVASGIGYFMW), 233 to 253 (TLGIMNNMHVPAGLLVNLAIW), and 256 to 276 (QPHWPTFITGALVILASLWVH). 2 consecutive EamA domains span residues 3-128 (LLII…AGII) and 139-274 (TGLL…ASLW).

It belongs to the drug/metabolite transporter (DMT) superfamily. 10 TMS drug/metabolite exporter (DME) (TC 2.A.7.3) family.

The protein resides in the cell inner membrane. The enzyme catalyses biotin(in) = biotin(out). In terms of biological role, uptake of biotin. In Escherichia coli O157:H7, this protein is Biotin transporter.